Here is a 1612-residue protein sequence, read N- to C-terminus: DNA topoisomerase 2-beta (1612 aa).

N-acetylalanine is present on A2. Residue K3 is modified to N6-acetyllysine. Glycyl lysine isopeptide (Lys-Gly) (interchain with G-Cter in SUMO2) cross-links involve residues K21 and K22. ATP-binding positions include N100, N129, and 157 to 159; that span reads SSN. Glycyl lysine isopeptide (Lys-Gly) (interchain with G-Cter in SUMO2) cross-links involve residues K165 and K166. 170–177 contributes to the ATP binding site; that stretch reads GRNGYGAK. Residues K216 and K287 each participate in a glycyl lysine isopeptide (Lys-Gly) (interchain with G-Cter in SUMO2) cross-link. Positions 351–353 are interaction with DNA; sequence KKK. Residues K355 and K361 each participate in a glycyl lysine isopeptide (Lys-Gly) (interchain with G-Cter in SUMO2) cross-link. 385-387 contributes to the ATP binding site; the sequence is QTK. Residues K425, K427, and K434 each participate in a glycyl lysine isopeptide (Lys-Gly) (interchain with G-Cter in SUMO2) cross-link. Positions 464–581 constitute a Toprim domain; sequence CTLILTEGDS…SLLKHGFLEE (118 aa). Mg(2+)-binding residues include E470, D550, and D552. Glycyl lysine isopeptide (Lys-Gly) (interchain with G-Cter in SUMO2) cross-links involve residues K588, K593, K623, K631, K634, K664, and K700. In terms of domain architecture, Topo IIA-type catalytic spans 724–1177; the sequence is IPSLVDGFKP…SPSDLWKEDL (454 aa). Residue Y814 is the O-(5'-phospho-DNA)-tyrosine intermediate of the active site. The segment at 999–1008 is interaction with DNA; that stretch reads KLQTTLTCNS. K1080 is covalently cross-linked (Glycyl lysine isopeptide (Lys-Gly) (interchain with G-Cter in SUMO2)). The segment at 1098–1128 is disordered; it reads AWKEAQEKAAEEEDTQNQHDDSSSDSGTPSG. Residues K1202, K1205, K1214, and K1215 each participate in a glycyl lysine isopeptide (Lys-Gly) (interchain with G-Cter in SUMO2) cross-link. S1224 carries the post-translational modification Phosphoserine. Glycyl lysine isopeptide (Lys-Gly) (interchain with G-Cter in SUMO2) cross-links involve residues K1238, K1250, and K1259. A disordered region spans residues 1245–1586; the sequence is LLKKKKGDPD…FTSEPPALPR (342 aa). T1280 is modified (phosphothreonine). Glycyl lysine isopeptide (Lys-Gly) (interchain with G-Cter in SUMO2) cross-links involve residues K1311 and K1315. Basic and acidic residues-rich tracts occupy residues 1322-1332 and 1346-1358; these read PWSDDESKSES and SLLRRAAAERPKY. Phosphoserine occurs at positions 1324, 1328, 1330, 1332, and 1346. Y1358 is subject to Phosphotyrosine. Residues 1362-1379 show a composition bias toward acidic residues; it reads FSEEEEEDADDDDDNNDL. Position 1363 is a phosphoserine (S1363). K1385 participates in a covalent cross-link: Glycyl lysine isopeptide (Lys-Gly) (interchain with G-Cter in SUMO2). S1387 carries the phosphoserine modification. T1390 carries the post-translational modification Phosphothreonine. At S1400 the chain carries Phosphoserine. Y1408 is modified (phosphotyrosine). S1411 is subject to Phosphoserine. The span at 1417–1429 shows a compositional bias: basic and acidic residues; that stretch reads ATPEKSSHDKKSQ. K1427 is covalently cross-linked (Glycyl lysine isopeptide (Lys-Gly) (interchain with G-Cter in SUMO2)). A phosphoserine mark is found at S1428, S1439, and S1441. K1443 participates in a covalent cross-link: Glycyl lysine isopeptide (Lys-Gly) (interchain with G-Cter in SUMO2). Residues 1443–1453 are compositionally biased toward basic and acidic residues; the sequence is KSEDDSAKFDS. Phosphoserine occurs at positions 1448, 1453, and 1460. A Glycyl lysine isopeptide (Lys-Gly) (interchain with G-Cter in SUMO2) cross-link involves residue K1477. An interaction with PLSCR1 region spans residues 1493-1499; it reads KAKRAPK. Residues S1509, S1511, and S1513 each carry the phosphoserine modification. Positions 1526-1536 are enriched in basic residues; sequence GKGRGAKKRKA. S1537 and S1539 each carry phosphoserine. Basic residues predominate over residues 1550–1561; it reads KPSKTASKKPKK. At T1562 the chain carries Phosphothreonine. Residues S1563 and S1568 each carry the phosphoserine modification. Y1596 bears the Phosphotyrosine mark. S1600 is subject to Phosphoserine.

This sequence belongs to the type II topoisomerase family. In terms of assembly, homodimer. Interacts with PLSCR1 and KIAA1210. Requires Mg(2+) as cofactor. Mn(2+) is required as a cofactor. The cofactor is Ca(2+).

The protein localises to the nucleus. It localises to the nucleolus. The protein resides in the nucleoplasm. It catalyses the reaction ATP-dependent breakage, passage and rejoining of double-stranded DNA.. Functionally, key decatenating enzyme that alters DNA topology by binding to two double-stranded DNA molecules, generating a double-stranded break in one of the strands, passing the intact strand through the broken strand, and religating the broken strand. The chain is DNA topoisomerase 2-beta (TOP2B) from Cricetulus longicaudatus (Long-tailed dwarf hamster).